Consider the following 109-residue polypeptide: Cell division suppressor protein YneA (109 aa).

Positions 39–90 (SEVDVNEGDSIWALADQYAAKSDMAKADFVSWVEKENNLTDGHVKAGDYVVI) constitute a LysM domain.

It belongs to the YneA family.

It localises to the cytoplasm. Functionally, inhibits cell division during the SOS response. Affects a later stage of the cell division protein assembly, after the assembly of the Z ring, by probably suppressing recruitment of FtsL and/or DivIC to the division machinery. This chain is Cell division suppressor protein YneA, found in Listeria innocua serovar 6a (strain ATCC BAA-680 / CLIP 11262).